A 206-amino-acid chain; its full sequence is Isopentenyl-diphosphate Delta-isomerase (206 aa).

2 residues coordinate Mn(2+): histidine 44 and histidine 51. Positions 49–183 (ALHLAFSCHV…PWAFSPWLVL (135 aa)) constitute a Nudix hydrolase domain. The active site involves cysteine 86. Cysteine 86 is a binding site for Mg(2+). Residue histidine 88 participates in Mn(2+) binding. Glutamate 106 lines the Mg(2+) pocket. Mn(2+)-binding residues include glutamate 133 and glutamate 135. Glutamate 135 is a catalytic residue.

It belongs to the IPP isomerase type 1 family. Mg(2+) serves as cofactor. Mn(2+) is required as a cofactor.

It is found in the cytoplasm. It carries out the reaction isopentenyl diphosphate = dimethylallyl diphosphate. It functions in the pathway isoprenoid biosynthesis; dimethylallyl diphosphate biosynthesis; dimethylallyl diphosphate from isopentenyl diphosphate: step 1/1. Functionally, catalyzes the 1,3-allylic rearrangement of the homoallylic substrate isopentenyl (IPP) to its highly electrophilic allylic isomer, dimethylallyl diphosphate (DMAPP). This chain is Isopentenyl-diphosphate Delta-isomerase, found in Agromyces mediolanus (Corynebacterium mediolanum).